The sequence spans 769 residues: Sensor protein DivL (769 aa).

Residues 6–26 traverse the membrane as a helical segment; the sequence is LILAAAAGAVCLAISVALWSH. The region spanning 547-758 is the Histidine kinase domain; it reads NVSYELRTPL…TFTCHLPETQ (212 aa). Tyr550 is modified (phosphotyrosine; by autocatalysis).

Post-translationally, autophosphorylated.

The protein resides in the cell membrane. The enzyme catalyses ATP + protein L-histidine = ADP + protein N-phospho-L-histidine.. In terms of biological role, required for cell division and growth. It catalyzes the phosphorylation of CtrA and activates transcription in vitro of the cell cycle-regulated fliF promoter. This is Sensor protein DivL (divL) from Caulobacter vibrioides (strain ATCC 19089 / CIP 103742 / CB 15) (Caulobacter crescentus).